The sequence spans 439 residues: 5-hydroxybenzimidazole synthase (439 aa).

Substrate-binding positions include Met96, Tyr125, His164, 187–189 (SKG), 228–231 (NGIR), and Glu267. His271 lines the Zn(2+) pocket. Position 294 (Tyr294) interacts with substrate. A Zn(2+)-binding site is contributed by His335. Residues Cys410, Cys413, and Cys417 each contribute to the [4Fe-4S] cluster site.

Belongs to the ThiC family. 5-hydroxybenzimidazole synthase subfamily. As to quaternary structure, homodimer. The cofactor is [4Fe-4S] cluster.

The catalysed reaction is 5-amino-1-(5-phospho-beta-D-ribosyl)imidazole + AH2 + S-adenosyl-L-methionine = 5-hydroxybenzimidazole + 5'-deoxyadenosine + formate + L-methionine + A + NH4(+) + phosphate + 2 H(+). Its function is as follows. Catalyzes the conversion of aminoimidazole ribotide (AIR) to 5-hydroxybenzimidazole (5-HBI) in a radical S-adenosyl-L-methionine (SAM)-dependent reaction. Is thus involved in the anaerobic biosynthesis of the benzimidazole lower axial ligand of the cobamide produced by D.autotrophicum. The sequence is that of 5-hydroxybenzimidazole synthase from Desulforapulum autotrophicum (strain ATCC 43914 / DSM 3382 / VKM B-1955 / HRM2) (Desulfobacterium autotrophicum).